We begin with the raw amino-acid sequence, 240 residues long: Uridylate kinase (240 aa).

12–15 is an ATP binding site; it reads KLSG. The involved in allosteric activation by GTP stretch occupies residues 20-25; the sequence is GDKGFG. Gly-54 contacts UMP. 2 residues coordinate ATP: Gly-55 and Arg-59. UMP is bound by residues Asp-74 and 135-142; that span reads TGSPYFST. The ATP site is built by Asn-163, Tyr-169, and Asp-172.

The protein belongs to the UMP kinase family. As to quaternary structure, homohexamer.

The protein localises to the cytoplasm. The catalysed reaction is UMP + ATP = UDP + ADP. It functions in the pathway pyrimidine metabolism; CTP biosynthesis via de novo pathway; UDP from UMP (UMPK route): step 1/1. With respect to regulation, allosterically activated by GTP. Inhibited by UTP. Catalyzes the reversible phosphorylation of UMP to UDP. This Levilactobacillus brevis (strain ATCC 367 / BCRC 12310 / CIP 105137 / JCM 1170 / LMG 11437 / NCIMB 947 / NCTC 947) (Lactobacillus brevis) protein is Uridylate kinase.